Consider the following 291-residue polypeptide: B-lymphocyte antigen CD20 (291 aa).

The Cytoplasmic segment spans residues 1-44 (MSGPFPAEPTKGPLAMQPAPKVNLKRTSSLVGPTQSFFMRESKA). Position 29 is a phosphoserine (Ser29). Residues 45 to 65 (LGAVQIMNGLFHITLGGLLMI) traverse the membrane as a helical segment. Residues 66 to 68 (PTG) are Extracellular-facing. The chain crosses the membrane as a helical span at residues 69-89 (VFAPICLSVWYPLWGGIMYII). The Cytoplasmic segment spans residues 90–111 (SGSLLAAAAEKTSRKSLVKAKV). A helical transmembrane segment spans residues 112–132 (IMSSLSLFAAISGIILSIMDI). The Extracellular segment spans residues 133–182 (LNMTLSHFLKMRRLELIQTSKPYVDIYDCEPSNSSEKNSPSTQYCNSIQS). A helical membrane pass occupies residues 183-203 (VFLGILSAMLISAFFQKLVTA). Residues 204–291 (GIVENEWKRM…SLPVENEIAP (88 aa)) lie on the Cytoplasmic side of the membrane. Cys214 is lipidated: S-palmitoyl cysteine. Ser219 carries the phosphoserine modification. The residue at position 233 (Thr233) is a Phosphothreonine. Over residues 261-270 (VQEEEEEEAE) the composition is skewed to acidic residues. The interval 261-291 (VQEEEEEEAEINFPAPPQEQESLPVENEIAP) is disordered.

Belongs to the MS4A family. Forms homotetramers. Interacts with the heavy and light chains of cell surface IgM, the antigen-binding components of the BCR. Phosphorylated.

Its subcellular location is the cell membrane. Its function is as follows. B-lymphocyte-specific membrane protein that plays a role in the regulation of cellular calcium influx necessary for the development, differentiation, and activation of B-lymphocytes. Functions as a store-operated calcium (SOC) channel component promoting calcium influx after activation by the B-cell receptor/BCR. This chain is B-lymphocyte antigen CD20 (Ms4a1), found in Mus musculus (Mouse).